A 485-amino-acid chain; its full sequence is Glutamyl-tRNA(Gln) amidotransferase subunit A (485 aa).

Residues Lys-78 and Ser-153 each act as charge relay system in the active site. Residue Ser-177 is the Acyl-ester intermediate of the active site.

Belongs to the amidase family. GatA subfamily. Heterotrimer of A, B and C subunits.

It carries out the reaction L-glutamyl-tRNA(Gln) + L-glutamine + ATP + H2O = L-glutaminyl-tRNA(Gln) + L-glutamate + ADP + phosphate + H(+). Functionally, allows the formation of correctly charged Gln-tRNA(Gln) through the transamidation of misacylated Glu-tRNA(Gln) in organisms which lack glutaminyl-tRNA synthetase. The reaction takes place in the presence of glutamine and ATP through an activated gamma-phospho-Glu-tRNA(Gln). This chain is Glutamyl-tRNA(Gln) amidotransferase subunit A, found in Lawsonia intracellularis (strain PHE/MN1-00).